Consider the following 336-residue polypeptide: IgLON family member 5 (336 aa).

The first 30 residues, 1 to 30 (MPPPAPGARLRLLAAAALAGLAVISRGLLS), serve as a signal peptide directing secretion. 3 consecutive Ig-like C2-type domains span residues 33 to 122 (LEFS…QPYT), 132 to 213 (PARI…VLVT), and 218 to 307 (PTIT…MRLL). Asn-41, Asn-49, Asn-67, and Asn-137 each carry an N-linked (GlcNAc...) asparagine glycan. A disulfide bridge connects residues Cys-54 and Cys-112. 2 cysteine pairs are disulfide-bonded: Cys-154-Cys-195 and Cys-238-Cys-291. Residue Asn-288 is glycosylated (N-linked (GlcNAc...) asparagine).

It belongs to the immunoglobulin superfamily. IgLON family.

The protein localises to the secreted. This Mus musculus (Mouse) protein is IgLON family member 5 (Iglon5).